Here is a 92-residue protein sequence, read N- to C-terminus: Alpha-conotoxin VxXXA (92 aa).

An N-terminal signal peptide occupies residues 1-24; the sequence is MPKLEMMLLVLLIFPLSYFIAAGG. A propeptide spanning residues 25–45 is cleaved from the precursor; sequence QVVQVDRRGDGLAGYLQRGDR. Residues Pro-55, Pro-70, and Pro-74 each carry the 4-hydroxyproline; partial modification. 4 cysteine pairs are disulfide-bonded: Cys-63–Cys-72, Cys-68–Cys-80, Cys-73–Cys-90, and Cys-78–Cys-92.

The protein belongs to the conotoxin D superfamily. As to quaternary structure, homodimer or pseudo-homodimer. Three dimers exist: homodimer of VxXXA, pseudo-homodimer of both VxXXA and [hydroxyPro-74]VxXXA and homodimer of [hydroxyPro-74]VxXXA. These three components exist in a 1:2:1 ratio. VxXXA stands for the form with the Pro-55 hydroxylated. A second major form has both Pro-55 and Pro-74 hydroxylated. The two major forms VxXXA and [hydroxyPro-74]VxXXA exist in a 1:1 ratio. In terms of processing, minor forms are [hydroxyPro-70,hydroxyPro-74]VxXXA and [Pro-55]VxXXA. Expressed by the venom duct.

It is found in the secreted. Functionally, alpha-conotoxins act on postsynaptic membranes, they bind to the nicotinic acetylcholine receptors (nAChR) and thus inhibit them. Through its two C-terminal domains, this homodimeric protein would bind to two nAChR allosteric sites, located outside the nAChR C-loop of the principal binding face and at the adjacent binding interface in a clockwise direction. This toxin specifically blocks mammalian neuronal nAChR of the alpha-7/CHRNA7, alpha-3-beta-2/CHRNA3-CHRNB2 (IC(50)=370 nM) and alpha-4-beta-2/CHRNA4-CHRNB2 subtypes. VxXXB inhibits alpha-7/CHRNA7 and alpha-3-beta-2/CHRNA3-CHRNB2 nAChR subtypes with the highest efficiency, followed by VxXXA and VxXXC. VxXXB and VxXXC inhibit the alpha-4-beta-2/CHRNA4-CHRNB2 nAChR subtype more efficiently than VxXXA. This is Alpha-conotoxin VxXXA from Conus vexillum (Flag cone).